Here is a 524-residue protein sequence, read N- to C-terminus: GMP synthase [glutamine-hydrolyzing] (524 aa).

Positions 9–207 (RILILDFGSQ…VIHICQCIPN (199 aa)) constitute a Glutamine amidotransferase type-1 domain. Cysteine 86 acts as the Nucleophile in catalysis. Catalysis depends on residues histidine 181 and glutamate 183. Residues 208–399 (WTTKHIIEDS…LGLPADLIYR (192 aa)) form the GMPS ATP-PPase domain. 235-241 (SGGVDSA) is a binding site for ATP.

As to quaternary structure, homodimer.

The catalysed reaction is XMP + L-glutamine + ATP + H2O = GMP + L-glutamate + AMP + diphosphate + 2 H(+). The protein operates within purine metabolism; GMP biosynthesis; GMP from XMP (L-Gln route): step 1/1. In terms of biological role, catalyzes the synthesis of GMP from XMP. The protein is GMP synthase [glutamine-hydrolyzing] of Coxiella burnetii (strain CbuK_Q154) (Coxiella burnetii (strain Q154)).